Here is a 148-residue protein sequence, read N- to C-terminus: uncharacterized protein (148 aa).

A helical transmembrane segment spans residues 22 to 40 (YFLSLTVVISIIHLFTTCV). The histidine-rich stretch occupies residues 43–141 (HNHSTHFPYL…YYPISRHYLH (99 aa)).

It is found in the host membrane. This is an uncharacterized protein from African swine fever virus (strain Badajoz 1971 Vero-adapted) (Ba71V).